A 99-amino-acid polypeptide reads, in one-letter code: Large ribosomal subunit protein uL23 (99 aa).

Belongs to the universal ribosomal protein uL23 family. Part of the 50S ribosomal subunit. Contacts protein L29, and trigger factor when it is bound to the ribosome.

One of the early assembly proteins it binds 23S rRNA. One of the proteins that surrounds the polypeptide exit tunnel on the outside of the ribosome. Forms the main docking site for trigger factor binding to the ribosome. This chain is Large ribosomal subunit protein uL23, found in Psychromonas ingrahamii (strain DSM 17664 / CCUG 51855 / 37).